The following is a 386-amino-acid chain: Lycopene beta-cyclase (386 aa).

NAD(+) is bound at residue 4 to 34; the sequence is DVLLAGAGLANGLIALALRAARPDLRVLLLD.

This sequence belongs to the lycopene cyclase family. The cofactor is FAD.

The catalysed reaction is a carotenoid psi-end group = a carotenoid beta-end derivative. It carries out the reaction all-trans-lycopene = gamma-carotene. It catalyses the reaction gamma-carotene = all-trans-beta-carotene. It participates in carotenoid biosynthesis; astaxanthin biosynthesis. Its function is as follows. Catalyzes the double cyclization reaction which converts lycopene to beta-carotene. This is Lycopene beta-cyclase from Paracoccus sp. (strain N81106 / MBIC 01143) (Agrobacterium aurantiacum).